A 103-amino-acid chain; its full sequence is Small ribosomal subunit protein uS10 (103 aa).

Belongs to the universal ribosomal protein uS10 family. As to quaternary structure, part of the 30S ribosomal subunit.

Its function is as follows. Involved in the binding of tRNA to the ribosomes. The polypeptide is Small ribosomal subunit protein uS10 (Syntrophobacter fumaroxidans (strain DSM 10017 / MPOB)).